The following is a 248-amino-acid chain: Metallo-beta-lactamase type 2 (248 aa).

The N-terminal stretch at 1-21 (MKRLKGLLVLALGFTGLQVFG) is a signal peptide. Zn(2+) is bound by residues His97, His99, Asp101, His160, and Cys179. Lys182 contacts substrate. Zn(2+) is bound at residue His221.

It belongs to the metallo-beta-lactamase superfamily. Class-B beta-lactamase family. In terms of assembly, monomer. Requires Zn(2+) as cofactor.

The protein resides in the periplasm. The catalysed reaction is a beta-lactam + H2O = a substituted beta-amino acid. Functionally, confers resistance to the different beta-lactams antibiotics (penicillin, cephalosporin and carbapenem) via the hydrolysis of the beta-lactam ring. This is Metallo-beta-lactamase type 2 (blaB6) from Elizabethkingia meningoseptica (Chryseobacterium meningosepticum).